Reading from the N-terminus, the 445-residue chain is MSELTKELMELVWGTKSSPGLSDTIFCRWTQGFVFSESEGSALEQFEGGPCAVIAPVQAFLLKKLLFSSEKSSWRDCSEEEQKELLCHTLCDILESACCDHSGSYCLVSWLRGKTTEETASISGSPAESSCQVEHSSALAVEELGFERFHALIQKRSFRSLPELKDAVLDQYSMWGNKFGVLLFLYSVLLTKGIENIKNEIEDASEPLIDPVYGHGSQSLINLLLTGHAVSNVWDGDRECSGMKLLGIHEQAAVGFLTLMEALRYCKVGSYLKSPKFPIWIVGSETHLTVFFAKDMALVAPEAPSEQARRVFQTYDPEDNGFIPDSLLEDVMKALDLVSDPEYINLMKNKLDPEGLGIILLGPFLQEFFPDQGSSGPESFTVYHYNGLKQSNYNEKVMYVEGTAVVMGFEDPMLQTDDTPIKRCLQTKWPYIELLWTTDRSPSLN.

Catalysis depends on C51, which acts as the Nucleophile. Residue S125 is modified to Phosphoserine. The active-site Proton acceptor is the H287.

It belongs to the MINDY deubiquitinase family. FAM188 subfamily. Interacts with COPS5. Widely expressed with high levels in heart, skeletal muscle, and kidney, and low levels in liver and brain. Also expressed in lung (at protein level).

Its subcellular location is the nucleus. It carries out the reaction Thiol-dependent hydrolysis of ester, thioester, amide, peptide and isopeptide bonds formed by the C-terminal Gly of ubiquitin (a 76-residue protein attached to proteins as an intracellular targeting signal).. Functionally, hydrolase that can remove 'Lys-48'-linked conjugated ubiquitin from proteins. The chain is Ubiquitin carboxyl-terminal hydrolase MINDY-3 from Homo sapiens (Human).